Here is a 768-residue protein sequence, read N- to C-terminus: Actin filament-associated protein 1-like 1 (768 aa).

The interval 83–145 (LRDMSDDGEP…GKSPEYISSH (63 aa)) is disordered. Residues Ser87, Ser93, Ser97, Ser103, and Ser153 each carry the phosphoserine modification. Positions 165 to 185 (SYPTTRMNGELKNSYNDSDAM) are enriched in polar residues. Residues 165–211 (SYPTTRMNGELKNSYNDSDAMSSSYESYDEEEEEEKGRQPKHQWPSE) are disordered. In terms of domain architecture, PH 1 spans 220 to 316 (DCRICAFLLR…WLKVIREVSR (97 aa)). Residues Ser329 and Ser343 each carry the phosphoserine modification. The segment covering 340-349 (KRLSQEKQNS) has biased composition (basic and acidic residues). The interval 340–382 (KRLSQEKQNSDSDSLGMNDSGSTLGRREACEHGKGKKNSLAEL) is disordered. The span at 350-362 (DSDSLGMNDSGST) shows a compositional bias: polar residues. A PH 2 domain is found at 418–512 (EVPCCGYLNV…WLGLLLVEMG (95 aa)). The residue at position 557 (Tyr557) is a Phosphotyrosine. The segment at 564–609 (KVQDEEPQRPTGAQVKRHASSCSEKSHRADPQVKVKRHASSANQYK) is disordered. The segment covering 587 to 596 (EKSHRADPQV) has biased composition (basic and acidic residues). Residues 611–701 (GKNRAEEDAR…AVKERLQQSL (91 aa)) adopt a coiled-coil conformation. The disordered stretch occupies residues 705–768 (PALGLSVSNK…KAKEWEMKKT (64 aa)). Polar residues predominate over residues 710–734 (SVSNKNKSQDTTNKPQSNAPEQSLP). Ser747 is modified (phosphoserine). The span at 759–768 (KAKEWEMKKT) shows a compositional bias: basic and acidic residues.

In terms of assembly, interacts with CTTN.

Its subcellular location is the cytoplasm. The protein localises to the cell projection. It localises to the podosome. The protein resides in the invadopodium. It is found in the cytoskeleton. Its subcellular location is the stress fiber. Its function is as follows. May be involved in podosome and invadosome formation. The polypeptide is Actin filament-associated protein 1-like 1 (Afap1l1) (Mus musculus (Mouse)).